Reading from the N-terminus, the 147-residue chain is Ribonuclease 4 (147 aa).

A signal peptide spans 1–28; that stretch reads MALQRTQAFLLLLLLTLLGLGLVQPSYG. Gln-29 bears the Pyrrolidone carboxylic acid mark. DUMP-binding residues include Arg-35, His-40, Lys-68, Asn-71, and Thr-72. Catalysis depends on His-40, which acts as the Proton acceptor. 4 cysteine pairs are disulfide-bonded: Cys-53–Cys-109, Cys-67–Cys-120, Cys-85–Cys-135, and Cys-92–Cys-99. His-144 acts as the Proton donor in catalysis. Residue Phe-145 coordinates dUMP.

It belongs to the pancreatic ribonuclease family.

The protein localises to the secreted. Its function is as follows. Cleaves preferentially after uridine bases. Has antimicrobial activity against uropathogenic E.coli (UPEC). Probably contributes to urinary tract sterility. This chain is Ribonuclease 4 (RNASE4), found in Bos taurus (Bovine).